Consider the following 298-residue polypeptide: CCR4-NOT transcription complex subunit 9 (298 aa).

Belongs to the CNOT9 family. As to quaternary structure, homodimer. Component of the CCR4-NOT complex.

Its subcellular location is the nucleus. The protein resides in the cytoplasm. It is found in the P-body. In terms of biological role, component of the CCR4-NOT complex which is one of the major cellular mRNA deadenylases and is linked to various cellular processes including bulk mRNA degradation, miRNA-mediated repression, translational repression during translational initiation and general transcription regulation. Additional complex functions may be a consequence of its influence on mRNA expression. Involved in down-regulation of MYB- and JUN-dependent transcription. Enhances ligand-dependent transcriptional activity of nuclear hormone receptors. May play a role in cell differentiation. The sequence is that of CCR4-NOT transcription complex subunit 9 from Danio rerio (Zebrafish).